A 344-amino-acid chain; its full sequence is Lipase chaperone (344 aa).

The helical transmembrane segment at V14–A34 threads the bilayer.

The protein belongs to the lipase chaperone family.

The protein localises to the cell inner membrane. Functionally, may be involved in the folding of the extracellular lipase during its passage through the periplasm. The protein is Lipase chaperone of Burkholderia ambifaria (strain MC40-6).